Here is a 609-residue protein sequence, read N- to C-terminus: Phosphoenolpyruvate carboxykinase [GTP] (609 aa).

Residues R81 and 220–222 each bind substrate; that span reads YGG. 2 residues coordinate Mn(2+): K229 and H249. S271 contributes to the substrate binding site. GTP is bound at residue 272 to 277; that stretch reads ACGKTN. C273 is a catalytic residue. Position 296 (D296) interacts with Mn(2+). 387–389 is a binding site for substrate; the sequence is NSR. Residues R389, R420, and 515–518 each bind GTP; that span reads FGEN.

Belongs to the phosphoenolpyruvate carboxykinase [GTP] family. Monomer. It depends on Mn(2+) as a cofactor.

It is found in the cytoplasm. The enzyme catalyses oxaloacetate + GTP = phosphoenolpyruvate + GDP + CO2. It participates in carbohydrate biosynthesis; gluconeogenesis. Catalyzes the conversion of oxaloacetate (OAA) to phosphoenolpyruvate (PEP), the rate-limiting step in the metabolic pathway that produces glucose from lactate and other precursors derived from the citric acid cycle. The protein is Phosphoenolpyruvate carboxykinase [GTP] of Mycobacterium leprae (strain Br4923).